We begin with the raw amino-acid sequence, 252 residues long: 3-deoxy-manno-octulosonate cytidylyltransferase (252 aa).

Belongs to the KdsB family.

It localises to the cytoplasm. The catalysed reaction is 3-deoxy-alpha-D-manno-oct-2-ulosonate + CTP = CMP-3-deoxy-beta-D-manno-octulosonate + diphosphate. Its pathway is nucleotide-sugar biosynthesis; CMP-3-deoxy-D-manno-octulosonate biosynthesis; CMP-3-deoxy-D-manno-octulosonate from 3-deoxy-D-manno-octulosonate and CTP: step 1/1. It participates in bacterial outer membrane biogenesis; lipopolysaccharide biosynthesis. Activates KDO (a required 8-carbon sugar) for incorporation into bacterial lipopolysaccharide in Gram-negative bacteria. The polypeptide is 3-deoxy-manno-octulosonate cytidylyltransferase (Nitratidesulfovibrio vulgaris (strain ATCC 29579 / DSM 644 / CCUG 34227 / NCIMB 8303 / VKM B-1760 / Hildenborough) (Desulfovibrio vulgaris)).